We begin with the raw amino-acid sequence, 474 residues long: ATP-dependent rRNA helicase RRP3 (474 aa).

The segment covering 1–10 (MPSMKRRKLS) has biased composition (basic residues). Residues 1-43 (MPSMKRRKLSHTPPQGEAEDGFSDSETSQASLQETPGNDEKIE) are disordered. A compositionally biased stretch (polar residues) spans 24 to 36 (DSETSQASLQETP). The Q motif motif lies at 48-76 (KSFKDLGIIDSLCEACDSLGYKAPTQIQA). Residues 79 to 250 (IPLALQGRDL…RASLSNPLRV (172 aa)) form the Helicase ATP-binding domain. 92-99 (AETGSGKT) is a binding site for ATP. The DEAD box signature appears at 198-201 (DEAD). Residues 278 to 422 (YLIYLLNEFP…EYKVEKEEVM (145 aa)) enclose the Helicase C-terminal domain. The tract at residues 442 to 474 (LHENRGKKGATLRNRRIGKGAKRSRDEMDREEG) is disordered. Positions 448 to 463 (KKGATLRNRRIGKGAK) are enriched in basic residues. A compositionally biased stretch (basic and acidic residues) spans 464–474 (RSRDEMDREEG).

The protein belongs to the DEAD box helicase family. DDX47/RRP3 subfamily. In terms of assembly, interacts with the SSU processome.

Its subcellular location is the nucleus. It catalyses the reaction ATP + H2O = ADP + phosphate + H(+). ATP-dependent rRNA helicase required for pre-ribosomal RNA processing. Involved in the maturation of the 35S-pre-rRNA and to its cleavage to mature 18S rRNA. This Coccidioides immitis (strain RS) (Valley fever fungus) protein is ATP-dependent rRNA helicase RRP3.